The sequence spans 453 residues: Homogentisate 1,2-dioxygenase (453 aa).

Histidine 306 serves as the catalytic Proton acceptor. Positions 349 and 355 each coordinate Fe cation. Residues tyrosine 364 and histidine 385 each coordinate homogentisate. Histidine 385 contacts Fe cation.

Belongs to the homogentisate dioxygenase family. In terms of assembly, hexamer; dimer of trimers. It depends on Fe cation as a cofactor.

The catalysed reaction is homogentisate + O2 = 4-maleylacetoacetate + H(+). It participates in amino-acid degradation; L-phenylalanine degradation; acetoacetate and fumarate from L-phenylalanine: step 4/6. Involved in the catabolism of homogentisate (2,5-dihydroxyphenylacetate or 2,5-OH-PhAc), a central intermediate in the degradation of phenylalanine and tyrosine. Catalyzes the oxidative ring cleavage of the aromatic ring of homogentisate to yield maleylacetoacetate. The polypeptide is Homogentisate 1,2-dioxygenase (Rhizobium etli (strain ATCC 51251 / DSM 11541 / JCM 21823 / NBRC 15573 / CFN 42)).